The chain runs to 85 residues: Toxin CsE8 (85 aa).

A signal peptide spans 1-19; the sequence is MNSLLMITACLVLFGTVWS. In terms of domain architecture, LCN-type CS-alpha/beta spans 20-83; sequence EKGYLVHEDT…TWPLIGKLCG (64 aa). 4 cysteine pairs are disulfide-bonded: C31-C82, C35-C58, C44-C63, and C48-C65. Position 82 is a cysteine amide (C82).

Belongs to the long (4 C-C) scorpion toxin superfamily. Sodium channel inhibitor family. Beta subfamily. As to expression, expressed by the venom gland.

The protein localises to the secreted. In terms of biological role, beta toxins bind voltage-independently at site-4 of sodium channels (Nav) and shift the voltage of activation toward more negative potentials thereby affecting sodium channel activation and promoting spontaneous and repetitive firing. The sequence is that of Toxin CsE8 from Centruroides sculpturatus (Arizona bark scorpion).